The chain runs to 381 residues: ATP synthase subunit a (381 aa).

Positions Pro24–His73 are disordered. The segment covering Ala47–Ala59 has biased composition (low complexity). Basic and acidic residues predominate over residues Ala60–His73. A run of 6 helical transmembrane segments spans residues Lys128–Val148, Leu190–Ala210, Asn215–Ile235, Leu255–Phe275, Phe290–Gly310, and Leu316–Leu336. A compositionally biased stretch (basic and acidic residues) spans Asp351–His360. Residues Asp351–Gly381 are disordered.

The protein belongs to the ATPase A chain family. In terms of assembly, F-type ATPases have 2 components, CF(1) - the catalytic core - and CF(0) - the membrane proton channel. CF(1) has five subunits: alpha(3), beta(3), gamma(1), delta(1), epsilon(1). CF(0) has three main subunits: a(1), b(2) and c(9-12). The alpha and beta chains form an alternating ring which encloses part of the gamma chain. CF(1) is attached to CF(0) by a central stalk formed by the gamma and epsilon chains, while a peripheral stalk is formed by the delta and b chains.

Its subcellular location is the cell inner membrane. Functionally, key component of the proton channel; it plays a direct role in the translocation of protons across the membrane. This is ATP synthase subunit a from Anaeromyxobacter dehalogenans (strain 2CP-C).